Here is a 545-residue protein sequence, read N- to C-terminus: Cryptochrome-1 (545 aa).

The 138-residue stretch at 3 to 140 folds into the Photolyase/cryptochrome alpha/beta domain; it reads INNILWFRHG…RCVENVSHTL (138 aa). FAD contacts are provided by residues R237, S265, S267, Q308, H375, 407–409, C413, and N416; that span reads DAD.

The protein belongs to the DNA photolyase class-1 family. As to quaternary structure, interacts with tim and per; promoted by light conditions. The cofactor is FAD.

The protein localises to the cytoplasm. Its subcellular location is the perinuclear region. The protein resides in the nucleus. Functionally, blue light-dependent regulator that is the input of the circadian feedback loop. Has no photolyase activity for cyclobutane pyrimidine dimers or 6-4 photoproducts. Regulation of expression by light suggests a role in photoreception for locomotor activity rhythms. Functions, together with per, as a transcriptional repressor required for the oscillation of peripheral circadian clocks and for the correct specification of clock cells. Genes directly activated by the transcription factors Clock (Clk) and cycle (cyc) are repressed by cry. The protein is Cryptochrome-1 of Anopheles gambiae (African malaria mosquito).